Reading from the N-terminus, the 484-residue chain is GDP-mannose transporter (484 aa).

2 stretches are compositionally biased toward basic and acidic residues: residues Met1 to Pro12 and Glu19 to Val28. Residues Met1 to Ser34 are disordered. The Cytoplasmic portion of the chain corresponds to Met1–Ala60. A helical membrane pass occupies residues Asn61 to Ile81. Topologically, residues Asn82 to Lys90 are lumenal. Residues Phe91–Ala111 traverse the membrane as a helical segment. The Cytoplasmic portion of the chain corresponds to Ala112 to Lys129. The chain crosses the membrane as a helical span at residues Thr130–Gln150. At His151–Pro155 the chain is on the lumenal side. The helical transmembrane segment at Ile156 to Phe176 threads the bilayer. Residues Asn177–Arg179 are Cytoplasmic-facing. A helical membrane pass occupies residues Ile180–Trp200. The Lumenal segment spans residues Pro201 to Ser287. A helical membrane pass occupies residues Thr288–Met308. At Arg309–Asp321 the chain is on the cytoplasmic side. A helical membrane pass occupies residues Thr322–Glu342. N-linked (GlcNAc...) asparagine glycosylation is present at Asn343. At Asn343–Thr360 the chain is on the lumenal side. A helical transmembrane segment spans residues Leu361–Trp381. Over Cys382–Thr390 the chain is Cytoplasmic. A helical transmembrane segment spans residues Tyr391 to Gly411. Topologically, residues Asn412–Pro413 are lumenal. The chain crosses the membrane as a helical span at residues Val414 to Val434. Topologically, residues Gly435–Gln484 are cytoplasmic.

Belongs to the TPT transporter family. SLC35D subfamily. Homooligomer.

The protein localises to the golgi apparatus membrane. It is found in the cytoplasmic vesicle membrane. The protein resides in the endoplasmic reticulum membrane. Involved in the import of GDP-mannose from the cytoplasm into the Golgi lumen. This Malassezia globosa (strain ATCC MYA-4612 / CBS 7966) (Dandruff-associated fungus) protein is GDP-mannose transporter (VRG4).